We begin with the raw amino-acid sequence, 1090 residues long: Protein unc-13 homolog D (1090 aa).

A C2 1 domain is found at 92–239 (EPEEHQQTLQ…FKEARKDKGQ (148 aa)). Ca(2+) contacts are provided by Asp-127 and Asp-133. A Phosphoserine modification is found at Ser-150. Positions 206 and 208 each coordinate Ca(2+). Residues 240 to 543 (DDFLGNVVLR…AKRVQDHTTV (304 aa)) are interaction with RAB27A. The 121-residue stretch at 557–677 (FQLYISLKEL…RLALVYCSLI (121 aa)) folds into the MHD1 domain. The MHD2 domain occupies 788 to 895 (EDAILPLMKF…ASSRELIRKY (108 aa)). Residues 910–1035 (ELGAVTVKAS…PGLSGSEEPG (126 aa)) enclose the C2 2 domain. Ca(2+)-binding residues include Leu-940, Asp-941, Asp-947, Asp-1005, Asp-1007, and Asp-1013. Positions 1026–1048 (PGLSGSEEPGEVPQTRLPLTYPA) are disordered.

This sequence belongs to the unc-13 family. As to quaternary structure, interacts with DOC2A. Interacts with RAB27A. Interacts with RHOG; the interaction increases RhoG affinity to the membrane lipids, targets UNC13D to membrane lipids and facilitates cytotoxic granule (CG) docking to the plasma membrane. The cofactor is Ca(2+). In terms of tissue distribution, expressed at high levels in spleen, thymus and leukocytes. Also expressed in lung and placenta, and at very low levels in brain, heart, skeletal muscle and kidney. Expressed in cytotoxic T-lymphocytes (CTL) and mast cells.

The protein localises to the cytoplasm. It is found in the membrane. It localises to the late endosome. Its subcellular location is the recycling endosome. The protein resides in the lysosome. Plays a role in cytotoxic granule exocytosis in lymphocytes. Required for both granule maturation and granule docking and priming at the immunologic synapse. Regulates assembly of recycling and late endosomal structures, leading to the formation of an endosomal exocytic compartment that fuses with perforin-containing granules at the immunologic synapse and licences them for exocytosis. Regulates Ca(2+)-dependent secretory lysosome exocytosis in mast cells. This Homo sapiens (Human) protein is Protein unc-13 homolog D (UNC13D).